The chain runs to 235 residues: 7-cyano-7-deazaguanine synthase (235 aa).

An ATP-binding site is contributed by 10–20 (FSGGQDSTTCL). Zn(2+) contacts are provided by Cys198, Cys213, Cys216, and Cys219.

This sequence belongs to the QueC family. Requires Zn(2+) as cofactor.

The enzyme catalyses 7-carboxy-7-deazaguanine + NH4(+) + ATP = 7-cyano-7-deazaguanine + ADP + phosphate + H2O + H(+). It functions in the pathway purine metabolism; 7-cyano-7-deazaguanine biosynthesis. Its function is as follows. Catalyzes the ATP-dependent conversion of 7-carboxy-7-deazaguanine (CDG) to 7-cyano-7-deazaguanine (preQ(0)). This Paracidovorax citrulli (strain AAC00-1) (Acidovorax citrulli) protein is 7-cyano-7-deazaguanine synthase.